A 662-amino-acid polypeptide reads, in one-letter code: Histidine decarboxylase (662 aa).

Positions 81 and 194 each coordinate substrate. At K305 the chain carries N6-(pyridoxal phosphate)lysine.

This sequence belongs to the group II decarboxylase family. As to quaternary structure, homodimer. Pyridoxal 5'-phosphate serves as cofactor.

It carries out the reaction L-histidine + H(+) = histamine + CO2. It functions in the pathway amine and polyamine biosynthesis; histamine biosynthesis; histamine from L-histidine: step 1/1. Functionally, catalyzes the biosynthesis of histamine from histidine. This is Histidine decarboxylase (HDC) from Homo sapiens (Human).